Consider the following 419-residue polypeptide: Serine hydroxymethyltransferase 1 (419 aa).

(6S)-5,6,7,8-tetrahydrofolate is bound by residues L121 and 125–127 (GHL). K230 is subject to N6-(pyridoxal phosphate)lysine. 356–358 (SPF) lines the (6S)-5,6,7,8-tetrahydrofolate pocket.

This sequence belongs to the SHMT family. In terms of assembly, homodimer. It depends on pyridoxal 5'-phosphate as a cofactor.

The protein localises to the cytoplasm. It catalyses the reaction (6R)-5,10-methylene-5,6,7,8-tetrahydrofolate + glycine + H2O = (6S)-5,6,7,8-tetrahydrofolate + L-serine. The protein operates within one-carbon metabolism; tetrahydrofolate interconversion. Its pathway is amino-acid biosynthesis; glycine biosynthesis; glycine from L-serine: step 1/1. Functionally, catalyzes the reversible interconversion of serine and glycine with tetrahydrofolate (THF) serving as the one-carbon carrier. This reaction serves as the major source of one-carbon groups required for the biosynthesis of purines, thymidylate, methionine, and other important biomolecules. Also exhibits THF-independent aldolase activity toward beta-hydroxyamino acids, producing glycine and aldehydes, via a retro-aldol mechanism. The sequence is that of Serine hydroxymethyltransferase 1 from Colwellia psychrerythraea (strain 34H / ATCC BAA-681) (Vibrio psychroerythus).